The sequence spans 394 residues: Chaperone protein DnaJ (394 aa).

Residues 6 to 71 enclose the J domain; it reads DYYEVLEVTK…DKRARYDQFG (66 aa). The CR-type zinc-finger motif lies at 152 to 234; the sequence is GVEKKFKLKK…CGGEGIEYGE (83 aa). Zn(2+) contacts are provided by Cys165, Cys168, Cys182, Cys185, Cys208, Cys211, Cys222, and Cys225. CXXCXGXG motif repeat units lie at residues 165 to 172, 182 to 189, 208 to 215, and 222 to 229; these read CSHCHGTG, CPTCKGSG, CPTCNGEG, and CKVCGGEG.

Belongs to the DnaJ family. In terms of assembly, homodimer. The cofactor is Zn(2+).

It is found in the cytoplasm. Participates actively in the response to hyperosmotic and heat shock by preventing the aggregation of stress-denatured proteins and by disaggregating proteins, also in an autonomous, DnaK-independent fashion. Unfolded proteins bind initially to DnaJ; upon interaction with the DnaJ-bound protein, DnaK hydrolyzes its bound ATP, resulting in the formation of a stable complex. GrpE releases ADP from DnaK; ATP binding to DnaK triggers the release of the substrate protein, thus completing the reaction cycle. Several rounds of ATP-dependent interactions between DnaJ, DnaK and GrpE are required for fully efficient folding. Also involved, together with DnaK and GrpE, in the DNA replication of plasmids through activation of initiation proteins. The polypeptide is Chaperone protein DnaJ (Bacteroides fragilis (strain YCH46)).